We begin with the raw amino-acid sequence, 266 residues long: Type III pantothenate kinase (266 aa).

Residue 11–18 (DIGNTSTV) participates in ATP binding. 111 to 114 (GADR) is a substrate binding site. Asp-113 serves as the catalytic Proton acceptor. Residue Asp-135 coordinates K(+). Residue Thr-138 coordinates ATP. Thr-190 is a binding site for substrate.

This sequence belongs to the type III pantothenate kinase family. In terms of assembly, homodimer. The cofactor is NH4(+). It depends on K(+) as a cofactor.

It is found in the cytoplasm. The catalysed reaction is (R)-pantothenate + ATP = (R)-4'-phosphopantothenate + ADP + H(+). The protein operates within cofactor biosynthesis; coenzyme A biosynthesis; CoA from (R)-pantothenate: step 1/5. Functionally, catalyzes the phosphorylation of pantothenate (Pan), the first step in CoA biosynthesis. The chain is Type III pantothenate kinase from Deinococcus geothermalis (strain DSM 11300 / CIP 105573 / AG-3a).